The primary structure comprises 238 residues: Uridylate kinase (238 aa).

12–15 is a binding site for ATP; the sequence is KLSG. A UMP-binding site is contributed by glycine 54. Glycine 55 and arginine 59 together coordinate ATP. UMP is bound by residues aspartate 74 and 135-142; that span reads TGNPFFTT. Threonine 162, asparagine 163, tyrosine 168, and aspartate 171 together coordinate ATP.

The protein belongs to the UMP kinase family. Homohexamer.

It is found in the cytoplasm. The catalysed reaction is UMP + ATP = UDP + ADP. It participates in pyrimidine metabolism; CTP biosynthesis via de novo pathway; UDP from UMP (UMPK route): step 1/1. Inhibited by UTP. Its function is as follows. Catalyzes the reversible phosphorylation of UMP to UDP. The protein is Uridylate kinase of Rhodopseudomonas palustris (strain BisB18).